The chain runs to 351 residues: Phosphate acyltransferase (351 aa).

It belongs to the PlsX family. As to quaternary structure, homodimer. Probably interacts with PlsY.

It localises to the cytoplasm. It carries out the reaction a fatty acyl-[ACP] + phosphate = an acyl phosphate + holo-[ACP]. It functions in the pathway lipid metabolism; phospholipid metabolism. Catalyzes the reversible formation of acyl-phosphate (acyl-PO(4)) from acyl-[acyl-carrier-protein] (acyl-ACP). This enzyme utilizes acyl-ACP as fatty acyl donor, but not acyl-CoA. This chain is Phosphate acyltransferase, found in Maricaulis maris (strain MCS10) (Caulobacter maris).